The following is a 477-amino-acid chain: Glycogen synthase (477 aa).

Lys15 is a binding site for ADP-alpha-D-glucose.

The protein belongs to the glycosyltransferase 1 family. Bacterial/plant glycogen synthase subfamily.

The enzyme catalyses [(1-&gt;4)-alpha-D-glucosyl](n) + ADP-alpha-D-glucose = [(1-&gt;4)-alpha-D-glucosyl](n+1) + ADP + H(+). The protein operates within glycan biosynthesis; glycogen biosynthesis. Its function is as follows. Synthesizes alpha-1,4-glucan chains using ADP-glucose. The chain is Glycogen synthase (glgA) from Salmonella typhimurium (strain LT2 / SGSC1412 / ATCC 700720).